The primary structure comprises 561 residues: Sesquiterpene synthase 2 (561 aa).

Mg(2+)-binding residues include Asp313, Asp317, Asp458, and Glu466. Residues 313–317 (DDIYD) carry the DDXXD motif motif.

This sequence belongs to the terpene synthase family. Tpsa subfamily. It depends on Mn(2+) as a cofactor. Mg(2+) serves as cofactor.

The protein resides in the cytoplasm. It carries out the reaction (2E,6E)-farnesyl diphosphate + H2O = kunzeaol + diphosphate. The protein operates within secondary metabolite biosynthesis; terpenoid biosynthesis. In terms of biological role, involved in the biosynthesis of kunzeaol. Produces mainly (-)-germacrene D along with gamma-cadinene. This is Sesquiterpene synthase 2 (STS2) from Thapsia garganica (Deadly carrot).